We begin with the raw amino-acid sequence, 119 residues long: Large ribosomal subunit protein P3 (119 aa).

The interval 81 to 119 (GAAAGAASGGAAAEAPKAEEKKEEEKEESEDDLGFSLFD) is disordered. The span at 84–95 (AGAASGGAAAEA) shows a compositional bias: low complexity.

Belongs to the eukaryotic ribosomal protein P1/P2 family. Phosphorylated.

Plays an important role in the elongation step of protein synthesis. This Oryza sativa subsp. japonica (Rice) protein is Large ribosomal subunit protein P3.